Consider the following 352-residue polypeptide: Ion-translocating oxidoreductase complex subunit D (352 aa).

Helical transmembrane passes span 20 to 40 (IMLL…WFFG), 42 to 62 (GTLF…AIVL), 69 to 91 (VASH…SIPP), and 123 to 143 (PAMI…TSWL). At Thr187 the chain carries FMN phosphoryl threonine. A run of 5 helical transmembrane segments spans residues 215-235 (LAGV…VFLL), 242-262 (WHIP…GWLF), 267-287 (LASP…FFIL), 301-321 (LIFG…GGYP), and 322-342 (DGVA…DYYT).

It belongs to the NqrB/RnfD family. The complex is composed of six subunits: RsxA, RsxB, RsxC, RsxD, RsxE and RsxG. The cofactor is FMN.

It localises to the cell inner membrane. Part of a membrane-bound complex that couples electron transfer with translocation of ions across the membrane. Required to maintain the reduced state of SoxR. In Salmonella dublin (strain CT_02021853), this protein is Ion-translocating oxidoreductase complex subunit D.